Reading from the N-terminus, the 138-residue chain is Superoxide dismutase [Mn] (138 aa).

The Mn(2+) site is built by serine 1, histidine 49, aspartate 133, and histidine 137.

Belongs to the iron/manganese superoxide dismutase family. It depends on Mn(2+) as a cofactor.

It catalyses the reaction 2 superoxide + 2 H(+) = H2O2 + O2. In terms of biological role, destroys superoxide anion radicals which are normally produced within the cells and which are toxic to biological systems. In Mycobacterium marinum, this protein is Superoxide dismutase [Mn] (sodA).